A 167-amino-acid polypeptide reads, in one-letter code: Bacterioferritin (167 aa).

Positions 1–145 (MQGDPEVIEF…TQLDLIEKLG (145 aa)) constitute a Ferritin-like diiron domain. Positions 18 and 51 each coordinate Fe cation. Heme b is bound at residue M52. H54, E94, E127, and H130 together coordinate Fe cation.

Belongs to the bacterioferritin family. As to quaternary structure, homooligomer of 24 subunits, arranged as 12 dimers, that are packed together to form an approximately spherical molecule with a central cavity, in which large amounts of iron can be deposited. Heme b is required as a cofactor.

It carries out the reaction 4 Fe(2+) + O2 + 4 H(+) = 4 Fe(3+) + 2 H2O. It catalyses the reaction Fe(2+)(in) = Fe(2+)(out). In terms of biological role, iron-storage protein, whose ferroxidase center binds Fe(2+), oxidizes it using dioxygen to Fe(3+), and participates in the subsequent Fe(3+) oxide mineral core formation within the central cavity of the BFR protein shell. The protein is Bacterioferritin (bfr) of Streptomyces coelicolor (strain ATCC BAA-471 / A3(2) / M145).